The following is a 35-amino-acid chain: Photosystem II reaction center protein T (35 aa).

A helical membrane pass occupies residues 3-23 (ALVYTFLLVGTLGIIFFAIFF).

Belongs to the PsbT family. As to quaternary structure, PSII is composed of 1 copy each of membrane proteins PsbA, PsbB, PsbC, PsbD, PsbE, PsbF, PsbH, PsbI, PsbJ, PsbK, PsbL, PsbM, PsbT, PsbY, PsbZ, Psb30/Ycf12, at least 3 peripheral proteins of the oxygen-evolving complex and a large number of cofactors. It forms dimeric complexes.

It is found in the plastid. Its subcellular location is the chloroplast thylakoid membrane. In terms of biological role, found at the monomer-monomer interface of the photosystem II (PS II) dimer, plays a role in assembly and dimerization of PSII. PSII is a light-driven water plastoquinone oxidoreductase, using light energy to abstract electrons from H(2)O, generating a proton gradient subsequently used for ATP formation. The sequence is that of Photosystem II reaction center protein T from Chaetosphaeridium globosum (Charophycean green alga).